A 468-amino-acid chain; its full sequence is IQ domain-containing protein C (468 aa).

The 30-residue stretch at 6 to 35 folds into the IQ domain; sequence LVLKVTALQACIRGFLVRRQFQSLRGEYEA. Disordered stretches follow at residues 113–157, 202–245, and 329–468; these read NASS…GPGL, EVNQ…PGEP, and SHKE…GPAG. Residues 139–150 are compositionally biased toward basic and acidic residues; the sequence is QETRDVSRKNDP. Basic and acidic residues predominate over residues 415–426; the sequence is SSIERSPSESSH.

This Bos taurus (Bovine) protein is IQ domain-containing protein C (IQCC).